The sequence spans 1180 residues: RecBCD enzyme subunit RecB (1180 aa).

The segment at 1 to 852 (MITTIPKSIN…QSGKNHISTK (852 aa)) is DNA-binding and helicase activity, interacts with RecC. Residues 3–448 (TTIPKSINVT…YFLDTNWRSS (446 aa)) enclose the UvrD-like helicase ATP-binding domain. ATP is bound at residue 24–31 (ASAGTGKT). In terms of domain architecture, UvrD-like helicase C-terminal spans 478–745 (SSRINKTTKF…KIVSIHKSKG (268 aa)). Residues 905–1180 (NYNFTSYSQL…EIIKKLEQIF (276 aa)) form a nuclease activity, interacts with RecD and RecA region. Residues His-964, Asp-1075, and Asp-1088 each contribute to the Mg(2+) site. Catalysis depends on Asp-1088, which acts as the For nuclease activity.

The protein belongs to the helicase family. UvrD subfamily. In terms of assembly, heterotrimer of RecB, RecC and RecD. All subunits contribute to DNA-binding. Interacts with RecA. It depends on Mg(2+) as a cofactor.

It carries out the reaction Exonucleolytic cleavage (in the presence of ATP) in either 5'- to 3'- or 3'- to 5'-direction to yield 5'-phosphooligonucleotides.. It catalyses the reaction Couples ATP hydrolysis with the unwinding of duplex DNA by translocating in the 3'-5' direction.. The enzyme catalyses ATP + H2O = ADP + phosphate + H(+). Functionally, a helicase/nuclease that prepares dsDNA breaks (DSB) for recombinational DNA repair. Binds to DSBs and unwinds DNA via a highly rapid and processive ATP-dependent bidirectional helicase activity. Unwinds dsDNA until it encounters a Chi (crossover hotspot instigator) sequence from the 3' direction. Cuts ssDNA a few nucleotides 3' to the Chi site. The properties and activities of the enzyme are changed at Chi. The Chi-altered holoenzyme produces a long 3'-ssDNA overhang and facilitates RecA-binding to the ssDNA for homologous DNA recombination and repair. Holoenzyme degrades any linearized DNA that is unable to undergo homologous recombination. In the holoenzyme this subunit contributes ATPase, 3'-5' helicase, exonuclease activity and loads RecA onto ssDNA. This is RecBCD enzyme subunit RecB from Buchnera aphidicola subsp. Baizongia pistaciae (strain Bp).